The sequence spans 503 residues: AMP phosphorylase (503 aa).

AMP contacts are provided by residues Gly-168, 194-199 (SRAITS), and Thr-203. The Proton donor role is filled by Asp-256. The AMP site is built by Ser-264 and Lys-288.

It belongs to the thymidine/pyrimidine-nucleoside phosphorylase family. Type 2 subfamily. As to quaternary structure, forms an exceptionally large macromolecular structure (&gt;40-mers) in solution.

It carries out the reaction AMP + phosphate = alpha-D-ribose 1,5-bisphosphate + adenine. The catalysed reaction is CMP + phosphate = cytosine + alpha-D-ribose 1,5-bisphosphate. It catalyses the reaction UMP + phosphate = alpha-D-ribose 1,5-bisphosphate + uracil. With respect to regulation, AMP phosphorolysis is allosterically regulated by the substrate AMP. Functionally, catalyzes the conversion of AMP and phosphate to adenine and ribose 1,5-bisphosphate (R15P). Exhibits phosphorylase activity toward CMP, dCMP and UMP in addition to AMP. Functions in an archaeal AMP degradation pathway, together with R15P isomerase and RubisCO. This is AMP phosphorylase from Thermococcus kodakarensis (strain ATCC BAA-918 / JCM 12380 / KOD1) (Pyrococcus kodakaraensis (strain KOD1)).